We begin with the raw amino-acid sequence, 60 residues long: UI (60 aa).

Over residues 1–14 (AAAAGDSAASDLLG) the composition is skewed to low complexity. The segment at 1-22 (AAAAGDSAASDLLGDNILRSED) is disordered. Val-60 bears the Valine amide mark.

Belongs to the sauvagine/corticotropin-releasing factor/urotensin I family.

The protein resides in the secreted. Its function is as follows. Urotensin is found in the teleost caudal neurosecretory system. It has a suggested role in osmoregulation and as a corticotropin-releasing factor. The non-hormonal portion of this precursor may be a urotensin binding protein, urophysin. This Platichthys flesus (European flounder) protein is UI.